The following is a 312-amino-acid chain: Ribosomal protein uL3 glutamine methyltransferase (312 aa).

Belongs to the protein N5-glutamine methyltransferase family. PrmB subfamily.

It catalyses the reaction L-glutaminyl-[ribosomal protein uL3] + S-adenosyl-L-methionine = N(5)-methyl-L-glutaminyl-[ribosomal protein uL3] + S-adenosyl-L-homocysteine + H(+). Methylates large ribosomal subunit protein uL3 on a specific glutamine residue. This Xylella fastidiosa (strain Temecula1 / ATCC 700964) protein is Ribosomal protein uL3 glutamine methyltransferase.